The chain runs to 211 residues: Imidazole glycerol phosphate synthase subunit HisH (211 aa).

One can recognise a Glutamine amidotransferase type-1 domain in the interval 1 to 206; sequence MIGIIDYGRG…GKWVNEDATV (206 aa). The active-site Nucleophile is C79. Active-site residues include H181 and E183.

Heterodimer of HisH and HisF.

It is found in the cytoplasm. It carries out the reaction 5-[(5-phospho-1-deoxy-D-ribulos-1-ylimino)methylamino]-1-(5-phospho-beta-D-ribosyl)imidazole-4-carboxamide + L-glutamine = D-erythro-1-(imidazol-4-yl)glycerol 3-phosphate + 5-amino-1-(5-phospho-beta-D-ribosyl)imidazole-4-carboxamide + L-glutamate + H(+). The catalysed reaction is L-glutamine + H2O = L-glutamate + NH4(+). It functions in the pathway amino-acid biosynthesis; L-histidine biosynthesis; L-histidine from 5-phospho-alpha-D-ribose 1-diphosphate: step 5/9. Its function is as follows. IGPS catalyzes the conversion of PRFAR and glutamine to IGP, AICAR and glutamate. The HisH subunit catalyzes the hydrolysis of glutamine to glutamate and ammonia as part of the synthesis of IGP and AICAR. The resulting ammonia molecule is channeled to the active site of HisF. This Desulfitobacterium hafniense (strain Y51) protein is Imidazole glycerol phosphate synthase subunit HisH.